Reading from the N-terminus, the 582-residue chain is Zinc finger protein somi-1 (582 aa).

2 disordered regions span residues 179-251 and 352-377; these read LRPE…NNTD and SAEPMKRHRVEAHEKQSPKKKVKKEQ. Residues 188 to 226 show a composition bias toward polar residues; that stretch reads TQKSTNGVHRSTSNSSAETLRNNSVSAATVSPSDDNSLN. A compositionally biased stretch (low complexity) spans 227-244; the sequence is SPALTSSGSAGSGTPPLG. Basic and acidic residues predominate over residues 352–368; the sequence is SAEPMKRHRVEAHEKQS. The segment at 454-477 adopts a C2H2-type; Degenerate zinc-finger fold; it reads YICEDCDFVTVYKGNMKRHLNTCH. The tract at residues 513-582 is disordered; it reads AHKANSSRGR…PPPPPPPMLL (70 aa). The span at 551–570 shows a compositional bias: low complexity; that stretch reads LLESLASSSSSMGGYSNGNN. Positions 572–582 are enriched in pro residues; it reads QPPPPPPPMLL.

In terms of assembly, may interact with swsn-9; the interaction promotes hypodermal differentiation. In terms of tissue distribution, expressed in hypodermal seam cells, the somatic gonad and vulval precursor cells, body wall muscle and head neurons.

The protein resides in the nucleus. DNA-binding protein which binds to the promoters of let-60, lin-14 and lin-28, possibly to regulate genes involved in hypodermal and vulval development. Together with miRNAs mir-84 and let-7 may direct terminal differentiation of the seam cells, exit from the molting cycle, and vulva formation. Does not regulate the expression of mir-84. May promote hypodermal differentiation in association with swsn-9, a component of SWI/SNF chromatin remodeling complexes. This is Zinc finger protein somi-1 from Caenorhabditis elegans.